We begin with the raw amino-acid sequence, 36 residues long: Dermonecrotic toxin LgSicTox-beta-LOXN1/LOXN7 (36 aa).

This sequence belongs to the arthropod phospholipase D family. Class II subfamily. The cofactor is Mg(2+). Post-translationally, contains 2 disulfide bonds. Expressed by the venom gland.

It localises to the secreted. The catalysed reaction is an N-(acyl)-sphingosylphosphocholine = an N-(acyl)-sphingosyl-1,3-cyclic phosphate + choline. It catalyses the reaction an N-(acyl)-sphingosylphosphoethanolamine = an N-(acyl)-sphingosyl-1,3-cyclic phosphate + ethanolamine. It carries out the reaction a 1-acyl-sn-glycero-3-phosphocholine = a 1-acyl-sn-glycero-2,3-cyclic phosphate + choline. The enzyme catalyses a 1-acyl-sn-glycero-3-phosphoethanolamine = a 1-acyl-sn-glycero-2,3-cyclic phosphate + ethanolamine. In terms of biological role, dermonecrotic toxins cleave the phosphodiester linkage between the phosphate and headgroup of certain phospholipids (sphingolipid and lysolipid substrates), forming an alcohol (often choline) and a cyclic phosphate. This toxin acts on sphingomyelin (SM). It may also act on ceramide phosphoethanolamine (CPE), lysophosphatidylcholine (LPC) and lysophosphatidylethanolamine (LPE), but not on lysophosphatidylserine (LPS), and lysophosphatidylglycerol (LPG). It acts by transphosphatidylation, releasing exclusively cyclic phosphate products as second products. Induces dermonecrosis, hemolysis, increased vascular permeability, edema, inflammatory response, and platelet aggregation. In Loxosceles gaucho (Spider), this protein is Dermonecrotic toxin LgSicTox-beta-LOXN1/LOXN7.